The following is a 206-amino-acid chain: MTFEWWFAYLLTSTLLSLSPGSGAINTMTTSINHGYRGAAASIAGLQTGLGIHIVLVGVGLGTLFSRSLIAFEILKWAGAAYLIWLGIQQWRAAGAIDLHTLAQTQSRGRLFKRAIFVNLTNPKSIVFLAALFPQFIMPQQPQLAQYLILGVTTIVVDMIVMTGYATLAQRIAAWIKGPKQMKALNKAFGSLFMLVGALLASARHA.

Transmembrane regions (helical) follow at residues 5–25 (WWFA…SGAI), 45–65 (GLQT…GTLF), 68–88 (SLIA…WLGI), 117–137 (FVNL…PQFI), 148–168 (LILG…YATL), and 182–202 (MKAL…LLAS).

Belongs to the Rht family.

It localises to the cell membrane. Functionally, conducts the efflux of homoserine and homoserine lactone. The polypeptide is Homoserine/homoserine lactone efflux protein (rhtB) (Salmonella typhi).